The primary structure comprises 1310 residues: Clustered mitochondria protein homolog (1310 aa).

The 245-residue stretch at 375 to 619 folds into the Clu domain; it reads DITRSQESYL…RVTPLDVVWQ (245 aa). A compositionally biased stretch (basic and acidic residues) spans 662 to 682; the sequence is KAQEDAANKEQPSETTESKEG. 2 disordered regions span residues 662 to 692 and 931 to 960; these read KAQE…EEAL and VANG…SRAV. 3 TPR repeats span residues 1033–1066, 1075–1108, and 1117–1150; these read AKLY…TERT, ILAY…WKII, and ITTM…CESL. 2 disordered regions span residues 1245-1266 and 1281-1310; these read VQPQ…ANAS and GGDA…KSSA.

Belongs to the CLU family. In terms of assembly, may associate with the eukaryotic translation initiation factor 3 (eIF-3) complex.

It is found in the cytoplasm. Functionally, mRNA-binding protein involved in proper cytoplasmic distribution of mitochondria. The chain is Clustered mitochondria protein homolog from Aspergillus fumigatus (strain CBS 144.89 / FGSC A1163 / CEA10) (Neosartorya fumigata).